Consider the following 83-residue polypeptide: uncharacterized protein (83 aa).

The chain crosses the membrane as a helical span at residues 58–80 (YWGYGAAYGISLGLIAGVALAGL).

Its subcellular location is the membrane. This is an uncharacterized protein from Bacillus subtilis (strain 168).